The primary structure comprises 444 residues: Acyl-CoA 6-desaturase (444 aa).

Residues 1 to 131 are Cytoplasmic-facing; the sequence is MGKGGNQGEG…DMNLFKTNHV (131 aa). Positions 18–95 constitute a Cytochrome b5 heme-binding domain; sequence VPTFSWEEIQ…LKPLLIGELA (78 aa). Residues 132–152 traverse the membrane as a helical segment; sequence FFLLLLAHIIALESIAWFTVF. Residues 153-157 are Lumenal-facing; the sequence is YFGNG. Residues 158-178 traverse the membrane as a helical segment; that stretch reads WIPTLITAFVLATSQAQAGWL. Residues 179–264 lie on the Cytoplasmic side of the membrane; it reads QHDYGHLSVY…KYLPYNHQHE (86 aa). The short motif at 180–184 is the Histidine box-1 element; that stretch reads HDYGH. A Histidine box-2 motif is present at residues 217–221; sequence HFQHH. The helical transmembrane segment at 265–285 threads the bilayer; it reads YFFLIGPPLLIPMYFQYQIIM. The Lumenal portion of the chain corresponds to 286-305; that stretch reads TMIVHKNWVDLAWAVSYYIR. The chain crosses the membrane as a helical span at residues 306–326; sequence FFITYIPFYGILGALLFLNFI. The Cytoplasmic segment spans residues 327-444; that stretch reads RFLESHWFVW…KLWLDAYLHK (118 aa). A Histidine box-3 motif is present at residues 382–386; it reads QIEHH.

The protein belongs to the fatty acid desaturase type 1 family. In terms of tissue distribution, expressed in a wide array of tissues, highest expression is found in liver followed by brain, lung, heart, and retina. A lower level is found in breast tumor when compared with normal tissues; lowest levels were found in patients with poor prognostic index.

It localises to the endoplasmic reticulum membrane. The catalysed reaction is (9Z,12Z)-octadecadienoyl-CoA + 2 Fe(II)-[cytochrome b5] + O2 + 2 H(+) = (6Z,9Z,12Z)-octadecatrienoyl-CoA + 2 Fe(III)-[cytochrome b5] + 2 H2O. It catalyses the reaction (9Z,12Z,15Z)-octadecatrienoyl-CoA + 2 Fe(II)-[cytochrome b5] + O2 + 2 H(+) = (6Z,9Z,12Z,15Z)-octadecatetraenoyl-CoA + 2 Fe(III)-[cytochrome b5] + 2 H2O. The enzyme catalyses hexadecanoyl-CoA + 2 Fe(II)-[cytochrome b5] + O2 + 2 H(+) = (6Z)-hexadecenoyl-CoA + 2 Fe(III)-[cytochrome b5] + 2 H2O. It carries out the reaction (9Z,12Z,15Z,18Z,21Z)-tetracosapentaenoyl-CoA + 2 Fe(II)-[cytochrome b5] + O2 + 2 H(+) = (6Z,9Z,12Z,15Z,18Z,21Z)-tetracosahexaenoyl-CoA + 2 Fe(III)-[cytochrome b5] + 2 H2O. The catalysed reaction is (11E)-octadecenoyl-CoA + 2 Fe(II)-[cytochrome b5] + O2 + 2 H(+) = (6Z,11E)-octadecadienoyl-CoA + 2 Fe(III)-[cytochrome b5] + 2 H2O. It catalyses the reaction (11Z,14Z)-eicosadienoyl-CoA + 2 Fe(II)-[cytochrome b5] + O2 + 2 H(+) = (8Z,11Z,14Z)-eicosatrienoyl-CoA + 2 Fe(III)-[cytochrome b5] + 2 H2O. The enzyme catalyses (11Z,14Z,17Z)-eicosatrienoyl-CoA + 2 Fe(II)-[cytochrome b5] + O2 + 2 H(+) = (8Z,11Z,14Z,17Z)-eicosatetraenoyl-CoA + 2 Fe(III)-[cytochrome b5] + 2 H2O. It participates in lipid metabolism; polyunsaturated fatty acid biosynthesis. In terms of biological role, involved in the biosynthesis of highly unsaturated fatty acids (HUFA) from the essential polyunsaturated fatty acids (PUFA) linoleic acid (LA) (18:2n-6) and alpha-linolenic acid (ALA) (18:3n-3) precursors, acting as a fatty acyl-coenzyme A (CoA) desaturase that introduces a cis double bond at carbon 6 of the fatty acyl chain. Catalyzes the first and rate limiting step in this pathway which is the desaturation of LA (18:2n-6) and ALA (18:3n-3) into gamma-linoleate (GLA) (18:3n-6) and stearidonate (18:4n-3), respectively. Subsequently, in the biosynthetic pathway of HUFA n-3 series, it desaturates tetracosapentaenoate (24:5n-3) to tetracosahexaenoate (24:6n-3), which is then converted to docosahexaenoate (DHA)(22:6n-3), an important lipid for nervous system function. Desaturates hexadecanate (palmitate) to produce 6Z-hexadecenoate (sapienate), a fatty acid unique to humans and major component of human sebum, that has been implicated in the development of acne and may have potent antibacterial activity. It can also desaturate (11E)-octadecenoate (trans-vaccenoate, the predominant trans fatty acid in human milk) at carbon 6 generating (6Z,11E)-octadecadienoate. In addition to Delta-6 activity, this enzyme exhibits Delta-8 activity with slight biases toward n-3 fatty acyl-CoA substrates. This Homo sapiens (Human) protein is Acyl-CoA 6-desaturase.